Here is an 882-residue protein sequence, read N- to C-terminus: DNA mismatch repair protein MutS (882 aa).

Residue 629–636 (GPNMGGKS) participates in ATP binding.

The protein belongs to the DNA mismatch repair MutS family.

This protein is involved in the repair of mismatches in DNA. It is possible that it carries out the mismatch recognition step. This protein has a weak ATPase activity. The protein is DNA mismatch repair protein MutS of Ralstonia nicotianae (strain ATCC BAA-1114 / GMI1000) (Ralstonia solanacearum).